Reading from the N-terminus, the 356-residue chain is Nicotinate-nucleotide--dimethylbenzimidazole phosphoribosyltransferase (356 aa).

The active-site Proton acceptor is the Glu-317.

Belongs to the CobT family. Homodimer.

It catalyses the reaction 5,6-dimethylbenzimidazole + nicotinate beta-D-ribonucleotide = alpha-ribazole 5'-phosphate + nicotinate + H(+). It participates in nucleoside biosynthesis; alpha-ribazole biosynthesis; alpha-ribazole from 5,6-dimethylbenzimidazole: step 1/2. Its function is as follows. Catalyzes the synthesis of alpha-ribazole-5'-phosphate from nicotinate mononucleotide (NAMN) and 5,6-dimethylbenzimidazole (DMB). The sequence is that of Nicotinate-nucleotide--dimethylbenzimidazole phosphoribosyltransferase from Salmonella paratyphi A (strain AKU_12601).